The following is a 557-amino-acid chain: Potassium-transporting ATPase potassium-binding subunit (557 aa).

The next 12 membrane-spanning stretches (helical) occupy residues 5-25, 63-83, 132-152, 170-190, 253-273, 283-303, 329-349, 356-376, 379-399, 416-436, 484-504, and 526-546; these read GFLL…PLGS, LCAI…MLLG, GLTV…FALI, LLRI…LFFI, FVQM…FGEV, LLWA…WAEV, VLVS…AVIA, ALGG…FGGV, GLYG…LMIG, LTAL…ALAM, LLAF…MAIA, and LFVG…FIPA.

Belongs to the KdpA family. The system is composed of three essential subunits: KdpA, KdpB and KdpC.

It localises to the cell inner membrane. Functionally, part of the high-affinity ATP-driven potassium transport (or Kdp) system, which catalyzes the hydrolysis of ATP coupled with the electrogenic transport of potassium into the cytoplasm. This subunit binds the periplasmic potassium ions and delivers the ions to the membrane domain of KdpB through an intramembrane tunnel. The protein is Potassium-transporting ATPase potassium-binding subunit of Escherichia coli O17:K52:H18 (strain UMN026 / ExPEC).